We begin with the raw amino-acid sequence, 162 residues long: Troponin C, skeletal muscle (162 aa).

An N-acetylalanine modification is found at alanine 1. 4 consecutive EF-hand domains span residues glutamate 17–threonine 52, proline 53–glutamate 88, lysine 93–serine 128, and isoleucine 129–glutamine 162. Ca(2+) is bound by residues aspartate 30, aspartate 32, aspartate 36, glutamate 41, aspartate 66, aspartate 68, serine 70, threonine 72, glutamate 77, aspartate 106, asparagine 108, aspartate 110, tyrosine 112, glutamate 117, aspartate 142, asparagine 144, aspartate 146, lysine 148, and glutamate 153.

It belongs to the troponin C family.

In terms of biological role, troponin is the central regulatory protein of striated muscle contraction. Tn consists of three components: Tn-I which is the inhibitor of actomyosin ATPase, Tn-T which contains the binding site for tropomyosin and Tn-C. The binding of calcium to Tn-C abolishes the inhibitory action of Tn on actin filaments. The polypeptide is Troponin C, skeletal muscle (Pelophylax lessonae (Pool frog)).